The primary structure comprises 449 residues: Omega-amino acid--pyruvate aminotransferase (449 aa).

A substrate-binding site is contributed by tryptophan 60. 119-120 (GS) lines the pyridoxal 5'-phosphate pocket. Residue lysine 288 is modified to N6-(pyridoxal phosphate)lysine. Threonine 327 serves as a coordination point for pyridoxal 5'-phosphate. Residues arginine 414 and glutamine 421 each contribute to the substrate site.

The protein belongs to the class-III pyridoxal-phosphate-dependent aminotransferase family. In terms of assembly, homotetramer. Pyridoxal 5'-phosphate serves as cofactor.

The catalysed reaction is 3-oxopropanoate + L-alanine = beta-alanine + pyruvate. Catalyzes transamination between a variety of omega-amino acids, mono and diamines, and pyruvate. Plays a pivotal role in the metabolism of the omega amino acids. The protein is Omega-amino acid--pyruvate aminotransferase of Pseudomonas putida (Arthrobacter siderocapsulatus).